The sequence spans 188 residues: Archaemetzincin (188 aa).

His-137 serves as a coordination point for Zn(2+). Glu-138 (proton acceptor) is an active-site residue. Zn(2+) contacts are provided by His-141, His-147, Cys-148, Cys-153, Cys-172, and Cys-175.

The protein belongs to the peptidase M54 family. As to quaternary structure, monomer. Zn(2+) is required as a cofactor.

Functionally, probable zinc metalloprotease whose natural substrate is unknown. The polypeptide is Archaemetzincin (Pyrococcus abyssi (strain GE5 / Orsay)).